Here is a 123-residue protein sequence, read N- to C-terminus: Large ribosomal subunit protein uL14c (123 aa).

Belongs to the universal ribosomal protein uL14 family. In terms of assembly, part of the 50S ribosomal subunit.

The protein localises to the plastid. It localises to the chloroplast. In terms of biological role, binds to 23S rRNA. The sequence is that of Large ribosomal subunit protein uL14c from Lolium perenne (Perennial ryegrass).